Consider the following 561-residue polypeptide: BTB/POZ domain-containing protein At2g46260 (561 aa).

Disordered regions lie at residues 1–31 (MRGSNNTDLFDPKTEMDSNFSRHGSSSEGDF) and 100–119 (LTDNNQPDMDDAPGGDNLDD). The span at 17-28 (DSNFSRHGSSSE) shows a compositional bias: polar residues. A compositionally biased stretch (acidic residues) spans 107-119 (DMDDAPGGDNLDD). Residues 143–212 (IDCSTVVRVK…MYSNSLSVTT (70 aa)) enclose the BTB domain. Residues 266 to 358 (QPLTDAAKQF…YMTCRKLKKV (93 aa)) form the BACK domain.

Its pathway is protein modification; protein ubiquitination. Its function is as follows. May act as a substrate-specific adapter of an E3 ubiquitin-protein ligase complex (CUL3-RBX1-BTB) which mediates the ubiquitination and subsequent proteasomal degradation of target proteins. The protein is BTB/POZ domain-containing protein At2g46260 of Arabidopsis thaliana (Mouse-ear cress).